The following is a 303-amino-acid chain: E3 ubiquitin-protein ligase SINA-like 3 (303 aa).

The disordered stretch occupies residues 1–30 (MENITNNSERSLDRPKRQRPVSMENVGGTA). Residues 49–85 (CPICYHKLGAPIYQCDNGHIACSSCCKKVKYKCPYCS) form an RING-type zinc finger. Residues 99-286 (IVEAVVVSCP…MSIPYYLLDE (188 aa)) form an SBD region. The SIAH-type zinc-finger motif lies at 102–162 (AVVVSCPNAK…LYRHYHAEHK (61 aa)). Zn(2+)-binding residues include cysteine 107, cysteine 114, histidine 128, cysteine 132, cysteine 139, cysteine 144, histidine 156, and histidine 161.

This sequence belongs to the SINA (Seven in absentia) family.

It carries out the reaction S-ubiquitinyl-[E2 ubiquitin-conjugating enzyme]-L-cysteine + [acceptor protein]-L-lysine = [E2 ubiquitin-conjugating enzyme]-L-cysteine + N(6)-ubiquitinyl-[acceptor protein]-L-lysine.. It participates in protein modification; protein ubiquitination. Functionally, E3 ubiquitin-protein ligase that mediates ubiquitination and subsequent proteasomal degradation of target proteins. E3 ubiquitin ligases accept ubiquitin from an E2 ubiquitin-conjugating enzyme in the form of a thioester and then directly transfers the ubiquitin to targeted substrates. It probably triggers the ubiquitin-mediated degradation of different substrates. In Arabidopsis thaliana (Mouse-ear cress), this protein is E3 ubiquitin-protein ligase SINA-like 3.